The sequence spans 413 residues: 1-deoxy-D-xylulose 5-phosphate reductoisomerase (413 aa).

Residues T21, G22, S23, I24, G47, and N127 each coordinate NADPH. K128 lines the 1-deoxy-D-xylulose 5-phosphate pocket. E129 lines the NADPH pocket. A Mn(2+)-binding site is contributed by D151. Residues S152, E153, S177, and H200 each coordinate 1-deoxy-D-xylulose 5-phosphate. E153 serves as a coordination point for Mn(2+). Residue G206 coordinates NADPH. Positions 213, 218, 219, and 222 each coordinate 1-deoxy-D-xylulose 5-phosphate. E222 contacts Mn(2+).

The protein belongs to the DXR family. Mg(2+) serves as cofactor. Requires Mn(2+) as cofactor.

It carries out the reaction 2-C-methyl-D-erythritol 4-phosphate + NADP(+) = 1-deoxy-D-xylulose 5-phosphate + NADPH + H(+). Its pathway is isoprenoid biosynthesis; isopentenyl diphosphate biosynthesis via DXP pathway; isopentenyl diphosphate from 1-deoxy-D-xylulose 5-phosphate: step 1/6. Its function is as follows. Catalyzes the NADPH-dependent rearrangement and reduction of 1-deoxy-D-xylulose-5-phosphate (DXP) to 2-C-methyl-D-erythritol 4-phosphate (MEP). This is 1-deoxy-D-xylulose 5-phosphate reductoisomerase from Mycobacterium bovis (strain ATCC BAA-935 / AF2122/97).